The primary structure comprises 203 residues: MTANHQSPGMHSILLLLLLPALTTTFSCNHLRHQDANFSWKSLQLLQNTAPPPPQPCPQQDVTFPFPETLLKSKDKKQAAITTLRILQHLFNMLSSPHTPKHWIDRTRHSLLNQIQHYIHHLEQCFVNQGTRSQRRGPRNAHLSINKYFRSIHNFLQHNNYSACTWDHVRLQARDCFRHVDTLIQWMKSRAPLTASSKRLNTQ.

Residues 1 to 27 (MTANHQSPGMHSILLLLLLPALTTTFS) form the signal peptide. Cystine bridges form between cysteine 28-cysteine 125 and cysteine 57-cysteine 164. 2 N-linked (GlcNAc...) asparagine glycosylation sites follow: asparagine 37 and asparagine 160.

It belongs to the alpha/beta interferon family.

It localises to the secreted. Its function is as follows. Has antiviral activities. This Gallus gallus (Chicken) protein is Interferon type B (IFNB).